We begin with the raw amino-acid sequence, 310 residues long: Cytosolic Fe-S cluster assembly factor Nubp1 homolog (310 aa).

[4Fe-4S] cluster contacts are provided by C8, C22, C25, and C31. 62-69 (GKGGVGKS) contributes to the ATP binding site. The [4Fe-4S] cluster site is built by C239 and C242.

It belongs to the Mrp/NBP35 ATP-binding proteins family. NUBP1/NBP35 subfamily. Heterotetramer of 2 Nubp1 and 2 Nubp2 chains. The cofactor is [4Fe-4S] cluster.

The protein localises to the cytoplasm. Its function is as follows. Component of the cytosolic iron-sulfur (Fe/S) protein assembly (CIA) machinery. Required for maturation of extramitochondrial Fe-S proteins. The Nubp1-Nubp2 heterotetramer forms a Fe-S scaffold complex, mediating the de novo assembly of an Fe-S cluster and its transfer to target apoproteins. The polypeptide is Cytosolic Fe-S cluster assembly factor Nubp1 homolog (Drosophila willistoni (Fruit fly)).